Here is a 343-residue protein sequence, read N- to C-terminus: Arginine-hydroxylase NDUFAF5, mitochondrial (343 aa).

A mitochondrion-targeting transit peptide spans M1–V29. The interval A18–S40 is disordered.

Belongs to the methyltransferase superfamily. As to quaternary structure, interacts with NDUFAF8, leading to stabilize NDUFAF5. Interacts with NDUFS7. Interacts with PYURF (via TRM112 domain); the interaction is direct and stabilizes NDUFAF5 protein.

It localises to the mitochondrion inner membrane. In terms of biological role, arginine hydroxylase that mediates hydroxylation of 'Arg-111' of NDUFS7 and is involved in the assembly of mitochondrial NADH:ubiquinone oxidoreductase complex (complex I, MT-ND1) at early stages. May also have methyltransferase activity. The chain is Arginine-hydroxylase NDUFAF5, mitochondrial from Rattus norvegicus (Rat).